Reading from the N-terminus, the 203-residue chain is UPF0637 protein SERP0693 (203 aa).

It belongs to the UPF0637 family.

This is UPF0637 protein SERP0693 from Staphylococcus epidermidis (strain ATCC 35984 / DSM 28319 / BCRC 17069 / CCUG 31568 / BM 3577 / RP62A).